A 273-amino-acid polypeptide reads, in one-letter code: NH(3)-dependent NAD(+) synthetase (273 aa).

46–53 contacts ATP; it reads GISGGQDS. Mg(2+) is bound at residue aspartate 52. Residue arginine 139 participates in deamido-NAD(+) binding. Threonine 159 lines the ATP pocket. Glutamate 164 contacts Mg(2+). Deamido-NAD(+)-binding residues include lysine 172 and aspartate 179. Positions 188 and 210 each coordinate ATP. Residue 259–260 participates in deamido-NAD(+) binding; the sequence is HK.

This sequence belongs to the NAD synthetase family. In terms of assembly, homodimer.

It carries out the reaction deamido-NAD(+) + NH4(+) + ATP = AMP + diphosphate + NAD(+) + H(+). The protein operates within cofactor biosynthesis; NAD(+) biosynthesis; NAD(+) from deamido-NAD(+) (ammonia route): step 1/1. In terms of biological role, catalyzes the ATP-dependent amidation of deamido-NAD to form NAD. Uses ammonia as a nitrogen source. The polypeptide is NH(3)-dependent NAD(+) synthetase (Mycobacteroides abscessus (strain ATCC 19977 / DSM 44196 / CCUG 20993 / CIP 104536 / JCM 13569 / NCTC 13031 / TMC 1543 / L948) (Mycobacterium abscessus)).